Consider the following 222-residue polypeptide: Probable nicotinate-nucleotide adenylyltransferase (222 aa).

It belongs to the NadD family.

It catalyses the reaction nicotinate beta-D-ribonucleotide + ATP + H(+) = deamido-NAD(+) + diphosphate. Its pathway is cofactor biosynthesis; NAD(+) biosynthesis; deamido-NAD(+) from nicotinate D-ribonucleotide: step 1/1. Catalyzes the reversible adenylation of nicotinate mononucleotide (NaMN) to nicotinic acid adenine dinucleotide (NaAD). This Pseudomonas syringae pv. tomato (strain ATCC BAA-871 / DC3000) protein is Probable nicotinate-nucleotide adenylyltransferase.